A 496-amino-acid chain; its full sequence is MIVSWSLKDAVVVVVGSGKNAYRRVNLCLSENSSKIFWFCRSSADGGFDVGHLQLDAKKSDAIEILPISEFDPVRSLTTLGKEETDFLVDAVFVSESNHHEKEILHRTCKRYRIPLNIIDNPSLCSFTLPATWSEPPLQISLSTSSNGCRLAQRLLRHVVSSLPSGMPEAIERFGRVRAITKTPEKKQWINHVSDFWPLEKLVRMTEDDLLAIVSDNFSLPLSSSQSSSLANSYESLSTTLDKPSLTLDPEAFPTHKRGSIALIGSGPGSPDLLTVAARKAIMKADYVLADKLVPEAVLQLIPRHTPLFIARKFPGNADKAQDELHQVAFDALSRGDYVVRLKQGDPYIYGRGGEEYLFFTQHGYVPTVIPGISSALMAPISAGIPVTHRGVADQFLVCTGTGQKGSMPKIPSFVPTQTTVFLMALHRLEILVQALIESGWPRVLPVCIAERVSCPDQRFIFSTLEDVVEEYNKYESLPPGLLITGYSCNTLRNTA.

The protein belongs to the precorrin methyltransferase family.

It catalyses the reaction uroporphyrinogen III + 2 S-adenosyl-L-methionine = precorrin-2 + 2 S-adenosyl-L-homocysteine + H(+). Siroheme synthase involved in methionine biosynthesis. The sequence is that of Probable uroporphyrinogen-III C-methyltransferase from Schizosaccharomyces pombe (strain 972 / ATCC 24843) (Fission yeast).